The primary structure comprises 255 residues: Hydroxyacylglutathione hydrolase (255 aa).

Residues H56, H58, D60, H61, H114, D133, and H171 each coordinate Zn(2+).

Belongs to the metallo-beta-lactamase superfamily. Glyoxalase II family. As to quaternary structure, monomer. It depends on Zn(2+) as a cofactor.

The catalysed reaction is an S-(2-hydroxyacyl)glutathione + H2O = a 2-hydroxy carboxylate + glutathione + H(+). It participates in secondary metabolite metabolism; methylglyoxal degradation; (R)-lactate from methylglyoxal: step 2/2. Functionally, thiolesterase that catalyzes the hydrolysis of S-D-lactoyl-glutathione to form glutathione and D-lactic acid. This is Hydroxyacylglutathione hydrolase from Roseobacter denitrificans (strain ATCC 33942 / OCh 114) (Erythrobacter sp. (strain OCh 114)).